The primary structure comprises 2282 residues: Protein Ycf2 (2282 aa).

Residue 1637 to 1644 (GSIGTGRS) coordinates ATP.

This sequence belongs to the Ycf2 family.

Its subcellular location is the plastid. It localises to the chloroplast stroma. In terms of biological role, probable ATPase of unknown function. Its presence in a non-photosynthetic plant (Epifagus virginiana) and experiments in tobacco indicate that it has an essential function which is probably not related to photosynthesis. The protein is Protein Ycf2 of Citrus sinensis (Sweet orange).